Reading from the N-terminus, the 658-residue chain is Glycogen debranching enzyme (658 aa).

The Nucleophile role is filled by Asp-336. The active-site Proton donor is Glu-371. The tract at residues 459 to 484 (EANGEENRDGTNSNYSDNHGKEGLGG) is disordered.

This sequence belongs to the glycosyl hydrolase 13 family.

The enzyme catalyses Hydrolysis of (1-&gt;6)-alpha-D-glucosidic linkages to branches with degrees of polymerization of three or four glucose residues in limit dextrin.. The protein operates within glycan degradation; glycogen degradation. Removes maltotriose and maltotetraose chains that are attached by 1,6-alpha-linkage to the limit dextrin main chain, generating a debranched limit dextrin. In Salmonella paratyphi A (strain ATCC 9150 / SARB42), this protein is Glycogen debranching enzyme.